The primary structure comprises 430 residues: Pre-mRNA-processing protein 45 (430 aa).

Polar residues predominate over residues 1 to 26; sequence MSFRTLSSLLPSPQNSEVSESSAFSR. 3 disordered regions span residues 1–28, 280–299, and 370–430; these read MSFR…SRQS, MERN…NKMS, and PTTG…PHTS.

Belongs to the SNW family. Associated with the spliceosome.

The protein localises to the nucleus. Involved in pre-mRNA splicing. In Kluyveromyces lactis (strain ATCC 8585 / CBS 2359 / DSM 70799 / NBRC 1267 / NRRL Y-1140 / WM37) (Yeast), this protein is Pre-mRNA-processing protein 45 (PRP45).